The following is a 1252-amino-acid chain: MARADTGRGLLVLTFCLLSARGELPLPQETTVKLSCDEGPLQVILGPEQAVVLDCTLGATAAGPPTRVTWSKDGDTVLEHENLHLLPNGSLWLSSPLEQEDSDDEEALRIWKVTEGSYSCLAHSPLGVVASQVAVVKLATLEDFSLHPESQIVEENGTARFECHTKGLPAPIITWEKDQVTVPEESRLITLPNGVLQILDVQDSDAGSYRCVATNSARQRFSQEASLTVALRGSLEATRGQDVVIVAAPENTTVVSGQSVVMECVASADPTPFVSWVRQDGKPISTDVIVLGRTNLLIASAQPRHSGVYVCRANKPRTRDFATAAAELRVLAAPAISQAPEALSRTRASTARFVCRASGEPRPALHWLHDGIPLRPNGRVKVQGGGGSLVITQIGLQDAGYYQCVAENSAGTACAAAPLAVVVREGLPSAPTRVTATPLSSSSVLVAWERPELHSEQIIGFSLHYQKARGVDNVEYQFAVNNDTTELQVRDLEPNTDYEFYVVAYSQLGASRTSSPALVHTLDDVPSAAPQLTLSSPNPSDIRVAWLPLPSSLSNGQVLKYKIEYGLGKEDQVFSTEVPGNETQLTLNSLQPNKVYRVRISAGTGAGYGVPSQWMQHRTPGVHNQSHVPFAPAELKVRAKMESLVVSWQPPPHPTQISGYKLYWREVGTEEEADGDRPPGGRGDQAWDVGPVRLKKKVKQYELTQLVPGRLYEVKLVAFNKHEDGYAAVWKGKTEKAPTPDLPIQRGPPLPPAHVHAESNSSTSIWLRWKKPDFTTVKIVNYTVRFGPWGLRNASLVTYYTSSGEDILIGGLKPFTKYEFAVQSHGVDMDGPFGSVVERSTLPDRPSTPPSDLRLSPLTPSTVRLHWCPPTEPNGEIVEYLILYSNNHTQPEHQWTLLTTEGNIFSAEVHGLESDTRYFFKMGARTEVGPGPFSRLQDVITLQKTFSDSLDVHAVTGIIVGVCLGLLCLLACMCAGLRRSSHREALPGLSSSGTPGNPALYTRARLGPPSVPAAHELESLVHPRPQDWSPPPSDVEDKAEVHSLMGGSVSDCRGHSKRKISWAQAGGPNWAGSWAGCELPQGSGPRPALTRALLPPAGTGQTLLLQALVYDAIKSNGRKKPSPACRNQVEAEVIVHSDFGASKGCPDLHLQDLEPEEPLTAETLPSTSGAVDLSQGADWLGRELGGCQPTTSGPERLTCLPEAASASCSCSDLQPSTAIEEAPGKSCQPKALCPLTVSPSLPRAPVSSAQVP.

The first 22 residues, 1 to 22 (MARADTGRGLLVLTFCLLSARG), serve as a signal peptide directing secretion. The Extracellular segment spans residues 23–956 (ELPLPQETTV…SDSLDVHAVT (934 aa)). Ig-like domains follow at residues 27 to 136 (PQET…VAVV), 142 to 228 (EDFS…ASLT), 241 to 329 (QDVV…AELR), and 334 to 420 (PAIS…APLA). Cystine bridges form between cysteine 55–cysteine 120 and cysteine 163–cysteine 211. Asparagine 88 carries an N-linked (GlcNAc...) asparagine glycan. The N-linked (GlcNAc...) asparagine glycan is linked to asparagine 251. Intrachain disulfides connect cysteine 264-cysteine 311 and cysteine 355-cysteine 404. 5 Fibronectin type-III domains span residues 430–524 (APTR…TLDD), 526–622 (PSAA…TPGV), 631–742 (APAE…TPDL), 751–844 (PPAH…TLPD), and 849–944 (PPSD…TLQK). Residues 669–688 (TEEEADGDRPPGGRGDQAWD) form a disordered region. The helical transmembrane segment at 957 to 977 (GIIVGVCLGLLCLLACMCAGL) threads the bilayer. Residues 978–1252 (RRSSHREALP…RAPVSSAQVP (275 aa)) lie on the Cytoplasmic side of the membrane. Phosphothreonine is present on threonine 994.

The protein belongs to the immunoglobulin superfamily. DCC family. Expressed in skeletal muscle, heart and brain. Brain expression is hippocampus-specific.

It is found in the cell membrane. The chain is Immunoglobulin superfamily DCC subclass member 4 (Igdcc4) from Mus musculus (Mouse).